The following is a 606-amino-acid chain: Elongation factor 4 (606 aa).

Positions 11-193 (DKIRNFSIVA…AIVTRLPPPK (183 aa)) constitute a tr-type G domain. Residues 23–28 (DHGKST) and 140–143 (NKVD) each bind GTP.

This sequence belongs to the TRAFAC class translation factor GTPase superfamily. Classic translation factor GTPase family. LepA subfamily.

It localises to the cell inner membrane. The catalysed reaction is GTP + H2O = GDP + phosphate + H(+). Its function is as follows. Required for accurate and efficient protein synthesis under certain stress conditions. May act as a fidelity factor of the translation reaction, by catalyzing a one-codon backward translocation of tRNAs on improperly translocated ribosomes. Back-translocation proceeds from a post-translocation (POST) complex to a pre-translocation (PRE) complex, thus giving elongation factor G a second chance to translocate the tRNAs correctly. Binds to ribosomes in a GTP-dependent manner. The chain is Elongation factor 4 from Caulobacter vibrioides (strain ATCC 19089 / CIP 103742 / CB 15) (Caulobacter crescentus).